Consider the following 171-residue polypeptide: Co-chaperone protein HscB homolog (171 aa).

A J domain is found at 2–74 (NHFELFGLPP…ISRAEYLLSQ (73 aa)).

The protein belongs to the HscB family. In terms of assembly, interacts with HscA and stimulates its ATPase activity.

Functionally, co-chaperone involved in the maturation of iron-sulfur cluster-containing proteins. Seems to help targeting proteins to be folded toward HscA. This Vibrio vulnificus (strain CMCP6) protein is Co-chaperone protein HscB homolog.